Consider the following 377-residue polypeptide: Chaperone protein DnaJ (377 aa).

The J domain maps to 5–70; the sequence is DYYQILGIPK…EKRSAYDQYG (66 aa). The segment at 132-210 adopts a CR-type zinc-finger fold; sequence GIKKEIQIPT…CHGQGRVETY (79 aa). Zn(2+) is bound by residues Cys-145, Cys-148, Cys-162, Cys-165, Cys-184, Cys-187, Cys-198, and Cys-201. CXXCXGXG motif repeat units follow at residues 145-152, 162-169, 184-191, and 198-205; these read CKTCYGSG, CSTCHGKG, CPTCHGKG, and CNLCHGQG.

It belongs to the DnaJ family. As to quaternary structure, homodimer. The cofactor is Zn(2+).

The protein resides in the cytoplasm. In terms of biological role, participates actively in the response to hyperosmotic and heat shock by preventing the aggregation of stress-denatured proteins and by disaggregating proteins, also in an autonomous, DnaK-independent fashion. Unfolded proteins bind initially to DnaJ; upon interaction with the DnaJ-bound protein, DnaK hydrolyzes its bound ATP, resulting in the formation of a stable complex. GrpE releases ADP from DnaK; ATP binding to DnaK triggers the release of the substrate protein, thus completing the reaction cycle. Several rounds of ATP-dependent interactions between DnaJ, DnaK and GrpE are required for fully efficient folding. Also involved, together with DnaK and GrpE, in the DNA replication of plasmids through activation of initiation proteins. This Buchnera aphidicola subsp. Acyrthosiphon pisum (strain Tuc7) protein is Chaperone protein DnaJ.